The chain runs to 130 residues: Small ribosomal subunit protein uS11 (130 aa).

It belongs to the universal ribosomal protein uS11 family. In terms of assembly, part of the 30S ribosomal subunit. Interacts with proteins S7 and S18. Binds to IF-3.

Functionally, located on the platform of the 30S subunit, it bridges several disparate RNA helices of the 16S rRNA. Forms part of the Shine-Dalgarno cleft in the 70S ribosome. In Prochlorococcus marinus (strain NATL1A), this protein is Small ribosomal subunit protein uS11.